Consider the following 141-residue polypeptide: Protein E6 (141 aa).

Zinc fingers lie at residues 27–64 (CRFC…CSSC) and 101–137 (CKFC…CRHC).

Belongs to the papillomaviridae E6 protein family. As to quaternary structure, forms homodimers. Interacts with ubiquitin-protein ligase UBE3A/E6-AP; this interaction stimulates UBE3A ubiquitin activity. Interacts with host BAK1.

It localises to the host cytoplasm. It is found in the host nucleus. Its function is as follows. Plays a major role in the induction and maintenance of cellular transformation. E6 associates with host UBE3A/E6-AP ubiquitin-protein ligase and modulates its activity. Protects host keratinocytes from apoptosis by mediating the degradation of host BAK1. May also inhibit host immune response. The polypeptide is Protein E6 (Human papillomavirus 15).